The sequence spans 153 residues: ATP synthase subunit b' (153 aa).

Residues 20–40 traverse the membrane as a helical segment; the sequence is TLPLMAVQVVLLTFILNALFF.

The protein belongs to the ATPase B chain family. In terms of assembly, F-type ATPases have 2 components, F(1) - the catalytic core - and F(0) - the membrane proton channel. F(1) has five subunits: alpha(3), beta(3), gamma(1), delta(1), epsilon(1). F(0) has four main subunits: a(1), b(1), b'(1) and c(10-14). The alpha and beta chains form an alternating ring which encloses part of the gamma chain. F(1) is attached to F(0) by a central stalk formed by the gamma and epsilon chains, while a peripheral stalk is formed by the delta, b and b' chains.

The protein localises to the cellular thylakoid membrane. Its function is as follows. F(1)F(0) ATP synthase produces ATP from ADP in the presence of a proton or sodium gradient. F-type ATPases consist of two structural domains, F(1) containing the extramembraneous catalytic core and F(0) containing the membrane proton channel, linked together by a central stalk and a peripheral stalk. During catalysis, ATP synthesis in the catalytic domain of F(1) is coupled via a rotary mechanism of the central stalk subunits to proton translocation. In terms of biological role, component of the F(0) channel, it forms part of the peripheral stalk, linking F(1) to F(0). The b'-subunit is a diverged and duplicated form of b found in plants and photosynthetic bacteria. The sequence is that of ATP synthase subunit b' from Prochlorococcus marinus (strain MIT 9211).